Consider the following 185-residue polypeptide: Peptide deformylase (185 aa).

Fe cation-binding residues include Cys-112 and His-155. Glu-156 is an active-site residue. Fe cation is bound at residue His-159.

The protein belongs to the polypeptide deformylase family. The cofactor is Fe(2+).

The enzyme catalyses N-terminal N-formyl-L-methionyl-[peptide] + H2O = N-terminal L-methionyl-[peptide] + formate. Its function is as follows. Removes the formyl group from the N-terminal Met of newly synthesized proteins. Requires at least a dipeptide for an efficient rate of reaction. N-terminal L-methionine is a prerequisite for activity but the enzyme has broad specificity at other positions. The protein is Peptide deformylase of Latilactobacillus sakei subsp. sakei (strain 23K) (Lactobacillus sakei subsp. sakei).